We begin with the raw amino-acid sequence, 145 residues long: 3-hydroxyacyl-[acyl-carrier-protein] dehydratase FabZ (145 aa).

His49 is a catalytic residue.

Belongs to the thioester dehydratase family. FabZ subfamily.

The protein resides in the cytoplasm. It carries out the reaction a (3R)-hydroxyacyl-[ACP] = a (2E)-enoyl-[ACP] + H2O. Functionally, involved in unsaturated fatty acids biosynthesis. Catalyzes the dehydration of short chain beta-hydroxyacyl-ACPs and long chain saturated and unsaturated beta-hydroxyacyl-ACPs. The protein is 3-hydroxyacyl-[acyl-carrier-protein] dehydratase FabZ of Anaplasma phagocytophilum (strain HZ).